Consider the following 88-residue polypeptide: Elongation factor 1-beta (88 aa).

Belongs to the EF-1-beta/EF-1-delta family.

Promotes the exchange of GDP for GTP in EF-1-alpha/GDP, thus allowing the regeneration of EF-1-alpha/GTP that could then be used to form the ternary complex EF-1-alpha/GTP/AAtRNA. The chain is Elongation factor 1-beta (ef1b) from Thermoplasma volcanium (strain ATCC 51530 / DSM 4299 / JCM 9571 / NBRC 15438 / GSS1).